The primary structure comprises 1372 residues: DNA-directed RNA polymerase subunit beta' (1372 aa).

Cys69, Cys71, Cys84, and Cys87 together coordinate Zn(2+). The Mg(2+) site is built by Asp460, Asp462, and Asp464. 4 residues coordinate Zn(2+): Cys808, Cys882, Cys889, and Cys892.

The protein belongs to the RNA polymerase beta' chain family. As to quaternary structure, the RNAP catalytic core consists of 2 alpha, 1 beta, 1 beta' and 1 omega subunit. When a sigma factor is associated with the core the holoenzyme is formed, which can initiate transcription. Mg(2+) serves as cofactor. The cofactor is Zn(2+).

It catalyses the reaction RNA(n) + a ribonucleoside 5'-triphosphate = RNA(n+1) + diphosphate. Functionally, DNA-dependent RNA polymerase catalyzes the transcription of DNA into RNA using the four ribonucleoside triphosphates as substrates. The chain is DNA-directed RNA polymerase subunit beta' from Rickettsia rickettsii (strain Iowa).